The sequence spans 48 residues: uncharacterized protein (48 aa).

Residues 1-48 (MLFCNNNNNNNNNNNNNNNNNNNNNNNNNNNNNNNNNNNSSNNNNFSR) are disordered.

This is an uncharacterized protein from Dictyostelium discoideum (Social amoeba).